Here is a 550-residue protein sequence, read N- to C-terminus: MESSRILITSALPYANGPLHFGHITGAYLPADVYARFQRLQGKEVLYICGSDEYGIAITLNAELAGMGYQEYVDMYHKLHKDTFKKLGISVDFFSRTTNAYHPAIVQDFYRNLQERGLVENQVTEQLYSEEEGKFLADRYVVGTCPKCGFDRARGDECQQCGADYEARDLKEPRSKLTGAALSLRDTEHAYLHLERMKEDLLAFVQGIYLRPHMRNFVTDYIEHLRPRAVTRDLSWGIPVPDLENKVFYVWFDAPIGYISGTMDWAASIGDPEAWKKFWLDDTVTYAQFIGKDNTSFHAVIFPAMEIGQSLPYKKVDALVTSEFLLLEGFQFSKSDGNFIDMDAFLETYSLDKLRYVLAAIAPETSDSEFSFQEFKTRCNSELVGKYGNFVNRVLAFAVKNGCTELSSPQLEQKDLDFISKSQKLAKDAAEHYAQYSLRKACSTIMELAALGNGYFNDEAPWKLAKEGNWNRVRAILFCACYCQKLLALISYPIMPETALKILEMIAPYSLDLGSQDPDRLHSLWTDSFFDYSEEKFSLKEPELLFTMVE.

The short motif at 13–23 (PYANGPLHFGH) is the 'HIGH' region element. Residues Cys145, Cys148, Cys158, and Cys161 each contribute to the Zn(2+) site. The 'KMSKS' region motif lies at 331–335 (QFSKS). Lys334 is a binding site for ATP.

The protein belongs to the class-I aminoacyl-tRNA synthetase family. MetG type 1 subfamily. In terms of assembly, monomer. Zn(2+) is required as a cofactor.

It localises to the cytoplasm. It catalyses the reaction tRNA(Met) + L-methionine + ATP = L-methionyl-tRNA(Met) + AMP + diphosphate. Its function is as follows. Is required not only for elongation of protein synthesis but also for the initiation of all mRNA translation through initiator tRNA(fMet) aminoacylation. The polypeptide is Methionine--tRNA ligase (Chlamydia trachomatis serovar L2b (strain UCH-1/proctitis)).